Here is a 355-residue protein sequence, read N- to C-terminus: Cyanide hydratase (355 aa).

Residues 6 to 286 form the CN hydrolase domain; sequence YKAAAVTSEP…GLLFVDIDLN (281 aa). The Proton acceptor role is filled by Glu-46. Lys-128 is a catalytic residue. Residue Cys-163 is the Nucleophile of the active site.

It belongs to the carbon-nitrogen hydrolase superfamily. Nitrilase family. As to quaternary structure, oligomer of dimers, forming left-handed helical fibers.

The catalysed reaction is formamide = hydrogen cyanide + H2O. Functionally, catalyzes the hydration of cyanide to formamide. Degradation of cyanide may be important for plant pathogenic fungi in infection of cyanogenic plants. Also has low but significant nitrilase activity with acetonitrile, propionitrile and benzonitrile. The sequence is that of Cyanide hydratase from Gibberella baccata (Fusarium lateritium).